Consider the following 685-residue polypeptide: Glycine--tRNA ligase beta subunit (685 aa).

Residues 58–77 are disordered; it reads GLTAQSPTTREERKGPRTDA. Residues 66–77 are compositionally biased toward basic and acidic residues; the sequence is TREERKGPRTDA.

The protein belongs to the class-II aminoacyl-tRNA synthetase family. Tetramer of two alpha and two beta subunits.

It is found in the cytoplasm. The catalysed reaction is tRNA(Gly) + glycine + ATP = glycyl-tRNA(Gly) + AMP + diphosphate. The polypeptide is Glycine--tRNA ligase beta subunit (Paracoccus denitrificans (strain Pd 1222)).